Consider the following 60-residue polypeptide: Cytotoxin 1 (60 aa).

4 disulfides stabilise this stretch: cysteine 3/cysteine 21, cysteine 14/cysteine 38, cysteine 42/cysteine 53, and cysteine 54/cysteine 59.

Belongs to the three-finger toxin family. Short-chain subfamily. Type IA cytotoxin sub-subfamily. Monomer, or heterodimer with alpha-cobratoxin (AC P01391); disulfide-linked. In terms of tissue distribution, expressed by the venom gland.

Its subcellular location is the secreted. The protein localises to the target cell membrane. Monomer: shows cytolytic activity (apoptosis is induced in C2C12 cells, but no cytotoxicity is observed on INS-1E). In addition, this toxin shows insulinotropic activity that may be mediated by the modulation of potassium channels (Kv). It induces the increase of intracellular calcium release. It induces insulin secretion from rat INS-1E cells in absence and in presence of glucose, without affecting cell viability and integrity. In presence of glucose, the insulinotropic activity is increased, suggesting a possible synergistic effect with glucose. Its insulinotropic activity does not involve GLP-1R signaling. Its function is as follows. Heterodimer: has no cytolytic activity, but retains most of the alpha-cobratoxin capacity to compete with alpha-bungarotoxin for binding to Torpedo and alpha-7/CHRNA7 nicotinic acetylcholine receptors (nAChRs) as well as to Lymnea stagnalis acetylcholine-binding protein. The protein is Cytotoxin 1 of Naja kaouthia (Monocled cobra).